The primary structure comprises 113 residues: uncharacterized protein (113 aa).

The helical transmembrane segment at 7-29 (FFILIVLLFTVFSLKEFIPNTFC) threads the bilayer.

The protein resides in the membrane. This is an uncharacterized protein from Aquifex aeolicus (strain VF5).